Here is a 426-residue protein sequence, read N- to C-terminus: Serine/threonine-protein kinase SRPK (426 aa).

Basic and acidic residues predominate over residues 1 to 23; it reads MENIFKEKEKGKEKAKEEEKEND. The disordered stretch occupies residues 1–40; the sequence is MENIFKEKEKGKEKAKEEEKENDSGDLFDSEDEGTEDYKK. Acidic residues predominate over residues 24–35; that stretch reads SGDLFDSEDEGT. One can recognise a Protein kinase domain in the interval 56–419; that stretch reads YRIVKKLGWG…ARDSLEHPYM (364 aa). ATP is bound by residues 62-70 and lysine 86; that span reads LGWGHFSTV. The active-site Proton acceptor is the aspartate 188. The short motif at 318–328 is the Nuclear localization signal element; it reads PKKGDKYDKTD.

Belongs to the protein kinase superfamily. CMGC Ser/Thr protein kinase family.

It localises to the nucleus. It carries out the reaction L-seryl-[protein] + ATP = O-phospho-L-seryl-[protein] + ADP + H(+). The catalysed reaction is L-threonyl-[protein] + ATP = O-phospho-L-threonyl-[protein] + ADP + H(+). In terms of biological role, phosphorylates serine/arginine-rich protein PSR. This is Serine/threonine-protein kinase SRPK from Physarum polycephalum (Slime mold).